The chain runs to 445 residues: MLQIKTEKEELDCGDDQNPKESSAVPLTDGASPEPQPQILQIKIKEEEPDYEYYLPTIKREMDPVPGAASPLAESEILQIKIKEEEPDSEDDGNSAATSAVTFRDWDNCWSDEENWDDSRPQLNQYNSDFPGSADTANTPAINTVLSRGNGLFVVNQEKRVATNSSCQSDTGHVDCSVGSEPSGFICCKCGDSFAHHSDLHTHLYACAGHNITSSFTNASEEGQHSHKNGGVLPREKPFKCTVCGKCFTLKNSLQLHHRIHTGEKPFTCTECGKSFAQSCSLQLHSRTHTGYNPYVCTECGKRFSSNSGLRRHMRTHTGVKPYACKECGKFFSDLSTLHRHQNSHKGEKPFICTECGKGFTLKDSLHRHQRTHTGEKPFICSQCGKSYSQSSNLIKHQMIHTGVKPFSCSECGKCFAVKDGLRNHQRVHMRRNYSAAQNVAEFSL.

The disordered stretch occupies residues 1–38; sequence MLQIKTEKEELDCGDDQNPKESSAVPLTDGASPEPQPQ. The residue at position 89 (S89) is a Phosphoserine; by CK2. The segment at 185-210 adopts a C2H2-type 1; atypical zinc-finger fold; sequence FICCKCGDSFAHHSDLHTHLYACAGH. C2H2-type zinc fingers lie at residues 239-261, 267-289, 295-317, 323-345, 351-373, 379-401, and 407-429; these read FKCT…HRIH, FTCT…SRTH, YVCT…MRTH, YACK…QNSH, FICT…QRTH, FICS…QMIH, and FSCS…QRVH.

Its function is as follows. Binds to RNA homomers. The protein is Gastrula zinc finger protein 5-1 of Xenopus laevis (African clawed frog).